The primary structure comprises 355 residues: Histidinol-phosphate aminotransferase (355 aa).

Lysine 214 is modified (N6-(pyridoxal phosphate)lysine).

This sequence belongs to the class-II pyridoxal-phosphate-dependent aminotransferase family. Histidinol-phosphate aminotransferase subfamily. As to quaternary structure, homodimer. Pyridoxal 5'-phosphate is required as a cofactor.

It carries out the reaction L-histidinol phosphate + 2-oxoglutarate = 3-(imidazol-4-yl)-2-oxopropyl phosphate + L-glutamate. It participates in amino-acid biosynthesis; L-histidine biosynthesis; L-histidine from 5-phospho-alpha-D-ribose 1-diphosphate: step 7/9. This Buchnera aphidicola subsp. Schizaphis graminum (strain Sg) protein is Histidinol-phosphate aminotransferase (hisC).